An 87-amino-acid polypeptide reads, in one-letter code: RNA-binding protein Hfq (87 aa).

The Sm domain maps to 9 to 68 (DPFLNALRRERIPVSIYLVNGIKLQGQIESFDQFVILLKNTVSQMVYKHAISTVVPARAV).

Belongs to the Hfq family. In terms of assembly, homohexamer.

Functionally, RNA chaperone that binds small regulatory RNA (sRNAs) and mRNAs to facilitate mRNA translational regulation in response to envelope stress, environmental stress and changes in metabolite concentrations. Also binds with high specificity to tRNAs. The polypeptide is RNA-binding protein Hfq (Aeromonas salmonicida (strain A449)).